A 455-amino-acid chain; its full sequence is D-arabinitol 4-dehydrogenase (455 aa).

This sequence belongs to the mannitol dehydrogenase family. In terms of assembly, monomer.

The enzyme catalyses D-arabinitol + NAD(+) = D-xylulose + NADH + H(+). It participates in carbohydrate metabolism; D-arabinitol metabolism. The sequence is that of D-arabinitol 4-dehydrogenase (dalD) from Klebsiella pneumoniae.